The following is a 761-amino-acid chain: Disintegrin and metalloproteinase domain-containing protein 24 (761 aa).

Residues 1-34 form the signal peptide; it reads MVAMSEALVHARITLLQAWLRMLLFSSVWPPTWC. Residues 35-200 constitute a propeptide that is removed on maturation; sequence AEYKGPPETV…GKSTRMQSIY (166 aa). The Extracellular portion of the chain corresponds to 35–697; it reads AEYKGPPETV…SKKDAPEKPN (663 aa). Residue N140 is glycosylated (N-linked (GlcNAc...) asparagine). A Cysteine switch motif is present at residues 172–179; it reads MRCGLTDE. Residue C174 coordinates Zn(2+). In terms of domain architecture, Peptidase M12B spans 208-400; it reads LYIKLALVID…KSCIHREPRP (193 aa). N227 and N301 each carry an N-linked (GlcNAc...) asparagine glycan. Cystine bridges form between C323–C393, C357–C379, C359–C364, C465–C485, C635–C646, C640–C652, and C654–C663. H342 serves as a coordination point for Zn(2+). The active site involves E343. Zn(2+) is bound by residues H346 and H352. N378, N390, and N479 each carry an N-linked (GlcNAc...) asparagine glycan. The region spanning 406-493 is the Disintegrin domain; the sequence is LKVCGNGIVE…ECPEDLFVQD (88 aa). The EGF-like domain occupies 631–664; sequence WVNDCTPETCNMKGVCNNKQHCHCDVGWSPPNCQ. A helical membrane pass occupies residues 698-718; that stretch reads VIIWLLPIICVAVVLSVLFCL. The Cytoplasmic segment spans residues 719–761; that stretch reads SGATKKSREAAASQPAEERVKPPYEGAEPSYETVKPPDEWANP. The interval 725–761 is disordered; the sequence is SREAAASQPAEERVKPPYEGAEPSYETVKPPDEWANP.

As to quaternary structure, monomer. Zn(2+) serves as cofactor. The prodomain is removed during sperm passage through the caput epididymis after the protein has reached the cell surface. Not processed in the secretory pathway. In terms of tissue distribution, expressed exclusively in testis and more specifically on the surface of mature sperm (at protein level).

It localises to the membrane. Functionally, plasma membrane protease present on mature sperm that may be involved in sperm function during epididymal maturation and/or fertilization. The protein is Disintegrin and metalloproteinase domain-containing protein 24 of Mus musculus (Mouse).